The following is a 375-amino-acid chain: Proton-coupled zinc antiporter SLC30A8 (375 aa).

Over 1-68 (MKGPEKAYLV…QREQTSAKKK (68 aa)) the chain is Cytoplasmic. Residues histidine 46, cysteine 47, and histidine 48 each contribute to the Zn(2+) site. Positions 46–48 (HCH) match the HCH Motif; seals regulatory zinc-binding pocket motif. A helical membrane pass occupies residues 69-89 (LCIASLICFVFISAEIVGGYI). At 90–98 (AGSLAVVTD) the chain is on the lumenal, vesicle side. The chain crosses the membrane as a helical span at residues 99–119 (AAHLLVDLSSFFISLGSLWLS). Residues histidine 101 and aspartate 105 each contribute to the Zn(2+) site. At 120–135 (SKSSTMRLTFGWYRAE) the chain is on the cytoplasmic side. A helical transmembrane segment spans residues 136 to 156 (ILGALMSIITIWLVTGVLVYL). Over 157 to 170 (AIERIIRPDYTIDG) the chain is Lumenal, vesicle. Residues 171–191 (TVMLITSACALGANVVLALIL) form a helical membrane-spanning segment. Topologically, residues 192 to 223 (HQSGHGHSHAGGKHEHMASEYKPQTNASIRAA) are cytoplasmic. The chain crosses the membrane as a helical span at residues 224–244 (FIHVIGDLFQSISVLISALII). 2 residues coordinate Zn(2+): histidine 226 and aspartate 230. The Lumenal, vesicle segment spans residues 245-251 (YFKPEYK). A helical membrane pass occupies residues 252–272 (IADPICTFIFSIFVLITTVTV). Topologically, residues 273–375 (LRDLLNILME…ECMFCYEPTQ (103 aa)) are cytoplasmic. Histidine 307, histidine 324, histidine 351, glutamate 358, cysteine 367, and cysteine 370 together coordinate Zn(2+).

Belongs to the cation diffusion facilitator (CDF) transporter (TC 2.A.4) family. SLC30A subfamily. In terms of assembly, homodimer.

It localises to the cytoplasmic vesicle. Its subcellular location is the secretory vesicle membrane. It is found in the cell membrane. The catalysed reaction is Zn(2+)(in) + 2 H(+)(out) = Zn(2+)(out) + 2 H(+)(in). Functionally, proton-coupled zinc ion antiporter mediating the entry of zinc into the lumen of pancreatic beta cell secretory granules, thereby regulating insulin secretion. This is Proton-coupled zinc antiporter SLC30A8 (slc30a8) from Xenopus laevis (African clawed frog).